A 195-amino-acid chain; its full sequence is Imidazoleglycerol-phosphate dehydratase (195 aa).

Belongs to the imidazoleglycerol-phosphate dehydratase family.

Its subcellular location is the cytoplasm. The enzyme catalyses D-erythro-1-(imidazol-4-yl)glycerol 3-phosphate = 3-(imidazol-4-yl)-2-oxopropyl phosphate + H2O. It functions in the pathway amino-acid biosynthesis; L-histidine biosynthesis; L-histidine from 5-phospho-alpha-D-ribose 1-diphosphate: step 6/9. This is Imidazoleglycerol-phosphate dehydratase from Endomicrobium trichonymphae.